Consider the following 132-residue polypeptide: UPF0332 protein TM_1000 (132 aa).

This sequence belongs to the UPF0332 family.

The protein is UPF0332 protein TM_1000 of Thermotoga maritima (strain ATCC 43589 / DSM 3109 / JCM 10099 / NBRC 100826 / MSB8).